The chain runs to 301 residues: Elongation factor Ts (301 aa).

An involved in Mg(2+) ion dislocation from EF-Tu region spans residues 82-85 (TDFV).

This sequence belongs to the EF-Ts family.

It localises to the cytoplasm. In terms of biological role, associates with the EF-Tu.GDP complex and induces the exchange of GDP to GTP. It remains bound to the aminoacyl-tRNA.EF-Tu.GTP complex up to the GTP hydrolysis stage on the ribosome. The chain is Elongation factor Ts from Hyphomonas neptunium (strain ATCC 15444).